The sequence spans 229 residues: 2-C-methyl-D-erythritol 4-phosphate cytidylyltransferase (229 aa).

It belongs to the IspD/TarI cytidylyltransferase family. IspD subfamily.

It catalyses the reaction 2-C-methyl-D-erythritol 4-phosphate + CTP + H(+) = 4-CDP-2-C-methyl-D-erythritol + diphosphate. The protein operates within isoprenoid biosynthesis; isopentenyl diphosphate biosynthesis via DXP pathway; isopentenyl diphosphate from 1-deoxy-D-xylulose 5-phosphate: step 2/6. In terms of biological role, catalyzes the formation of 4-diphosphocytidyl-2-C-methyl-D-erythritol from CTP and 2-C-methyl-D-erythritol 4-phosphate (MEP). The sequence is that of 2-C-methyl-D-erythritol 4-phosphate cytidylyltransferase from Shouchella clausii (strain KSM-K16) (Alkalihalobacillus clausii).